The primary structure comprises 121 residues: Large ribosomal subunit protein uL18 (121 aa).

It belongs to the universal ribosomal protein uL18 family. As to quaternary structure, part of the 50S ribosomal subunit; part of the 5S rRNA/L5/L18/L25 subcomplex. Contacts the 5S and 23S rRNAs.

Its function is as follows. This is one of the proteins that bind and probably mediate the attachment of the 5S RNA into the large ribosomal subunit, where it forms part of the central protuberance. This Ureaplasma parvum serovar 3 (strain ATCC 27815 / 27 / NCTC 11736) protein is Large ribosomal subunit protein uL18.